Consider the following 186-residue polypeptide: Peptidyl-tRNA hydrolase (186 aa).

Residue Y13 coordinates tRNA. The active-site Proton acceptor is H18. Residues Y59, N61, and N107 each coordinate tRNA.

Belongs to the PTH family. As to quaternary structure, monomer.

Its subcellular location is the cytoplasm. The enzyme catalyses an N-acyl-L-alpha-aminoacyl-tRNA + H2O = an N-acyl-L-amino acid + a tRNA + H(+). Its function is as follows. Hydrolyzes ribosome-free peptidyl-tRNAs (with 1 or more amino acids incorporated), which drop off the ribosome during protein synthesis, or as a result of ribosome stalling. In terms of biological role, catalyzes the release of premature peptidyl moieties from peptidyl-tRNA molecules trapped in stalled 50S ribosomal subunits, and thus maintains levels of free tRNAs and 50S ribosomes. This is Peptidyl-tRNA hydrolase from Thermotoga sp. (strain RQ2).